Reading from the N-terminus, the 467-residue chain is MRCTSFSSFSLSLEDALHLLQRFLYSSNQIKQIHTVLLTSNALVASRWKTKCVYNTLIRSYLTTGEYKTSLALFTHMLASHVQPNNLTFPSLIKAACSSFSVSYGVALHGQALKRGFLWDPFVQTSFVRFYGEVGDLESSRKMFDDILNPCVVACNSLLDACGRNGEMDYAFEYFQRMPVTDVVSWTTVINGFSKKGLHAKALMVFGEMIQNERAVITPNEATFVSVLSSCANFDQGGIRLGKQIHGYVMSKEIILTTTLGTALLDMYGKAGDLEMALTIFDQIRDKKVCAWNAIISALASNGRPKQALEMFEMMKSSYVHPNGITLLAILTACARSKLVDLGIQLFSSICSEYKIIPTSEHYGCVVDLIGRAGLLVDAANFIQSLPFEPDASVLGALLGACKIHENTELGNTVGKQLIGLQPQHCGQYVALSTFNALDSNWSEAEKMRKAMIEAGIRKIPAYSVLT.

PPR repeat units lie at residues 50–84 (TKCV…HVQP), 85–119 (NNLT…GFLW), 120–150 (DPFV…ILNP), 151–181 (CVVA…MPVT), 182–216 (DVVS…ERAV), 220–256 (NEAT…EIIL), 257–287 (TTTL…IRDK), 288–322 (KVCA…YVHP), 323–358 (NGIT…KIIP), and 359–389 (TSEH…LPFE). A type E motif; degenerate region spans residues 394-467 (VLGALLGACK…RKIPAYSVLT (74 aa)).

Belongs to the PPR family. PCMP-E subfamily.

The protein is Putative pentatricopeptide repeat-containing protein At1g10330 (PCMP-E71) of Arabidopsis thaliana (Mouse-ear cress).